The following is a 798-amino-acid chain: Integrin beta-1 (798 aa).

The first 20 residues, 1–20 (MNLQLIFWIGLISSVCYVFG), serve as a signal peptide directing secretion. The Extracellular portion of the chain corresponds to 21–728 (QADENRCLKA…ETPECPTGPD (708 aa)). Residues 26-76 (RCLKANAKSCGECIQAGPNCGWCTNSTFLQEGMPTSARCDDLEALRKKGCH) form the PSI domain. Cystine bridges form between cysteine 27/cysteine 45, cysteine 35/cysteine 464, cysteine 38/cysteine 64, cysteine 48/cysteine 75, cysteine 207/cysteine 213, cysteine 261/cysteine 301, cysteine 401/cysteine 415, cysteine 435/cysteine 462, cysteine 466/cysteine 486, cysteine 477/cysteine 489, cysteine 491/cysteine 500, cysteine 502/cysteine 533, cysteine 516/cysteine 531, cysteine 525/cysteine 536, cysteine 538/cysteine 553, cysteine 555/cysteine 576, cysteine 560/cysteine 574, cysteine 568/cysteine 579, cysteine 581/cysteine 590, cysteine 592/cysteine 615, cysteine 599/cysteine 613, cysteine 607/cysteine 618, cysteine 620/cysteine 630, cysteine 633/cysteine 636, cysteine 640/cysteine 691, cysteine 646/cysteine 665, cysteine 649/cysteine 661, and cysteine 699/cysteine 723. An N-linked (GlcNAc...) asparagine glycan is attached at asparagine 50. Over residues 75-84 (CHPDDIENPR) the composition is skewed to basic and acidic residues. Residues 75 to 107 (CHPDDIENPRGSKNIKKNKNVTNRSKGTAEKLQ) are disordered. Residues asparagine 94 and asparagine 97 are each glycosylated (N-linked (GlcNAc...) asparagine). Residues 140–378 (DYPIDLYYLM…QLIIDAYNSL (239 aa)) form the VWFA domain. Mg(2+)-binding residues include serine 152 and serine 154. The Ca(2+) site is built by serine 154, aspartate 157, aspartate 158, and glutamate 189. A CX3CL1-binding region spans residues 207 to 213 (CTSEQNC). Asparagine 212 carries N-linked (GlcNAc...) asparagine glycosylation. Asparagine 244, aspartate 246, proline 248, and glutamate 249 together coordinate Ca(2+). Glutamate 249 contacts Mg(2+). Asparagine 269 is a glycosylation site (N-linked (GlcNAc...) asparagine). Residues 295–314 (LPNDGHCHLENDVYTMSHYY) form a CX3CL1-binding region. Alanine 362 provides a ligand contact to Ca(2+). Asparagine 363, asparagine 406, and asparagine 417 each carry an N-linked (GlcNAc...) asparagine glycan. Residues 383–465 (ILENSKLPEG…IILQFICECE (83 aa)) form an interaction with TMEM182 region. I-EGF domains are found at residues 466–501 (CQSE…RHCE), 502–554 (CSTD…KFCE), 555–591 (CDNF…SACD), and 592–631 (CSLD…PTCE). Asparagine 481 carries N-linked (GlcNAc...) asparagine glycosylation. The N-linked (GlcNAc...) asparagine glycan is linked to asparagine 520. A glycan (N-linked (GlcNAc...) asparagine) is linked at asparagine 584. Residue asparagine 669 is glycosylated (N-linked (GlcNAc...) asparagine). The helical transmembrane segment at 729–749 (IIPIVAGVVAGIVLIGLALLL) threads the bilayer. Topologically, residues 750–798 (IWKLLMIIHDRREFAKFEKEKMNAKWDTGENPIYKSAVTTVVNPKYEGK) are cytoplasmic. The signal for sorting from recycling endosomes; interaction with ACAP1 stretch occupies residues 762–767 (EFAKFE). Threonine 777 carries the phosphothreonine modification. Phosphotyrosine is present on tyrosine 783. Serine 785 carries the post-translational modification Phosphoserine. Positions 785–792 (SAVTTVVN) are interaction with ITGB1BP1. Threonine 789 carries the phosphothreonine modification. At lysine 794 the chain carries N6-acetyllysine; alternate. A Glycyl lysine isopeptide (Lys-Gly) (interchain with G-Cter in SUMO1); alternate cross-link involves residue lysine 794.

The protein belongs to the integrin beta chain family. As to quaternary structure, interacts with seprase FAP (seprase); the interaction occurs at the cell surface of invadopodia membrane in a collagen-dependent manner. Heterodimer of an alpha and a beta subunit. Beta-1 associates with either alpha-1, alpha-2, alpha-3, alpha-4, alpha-5, alpha-6, alpha-7, alpha-8, alpha-9, alpha-10, alpha-11 or alpha-V. ITGA6:ITGB1 is found in a complex with CD9; interaction takes place in oocytes and is involved in sperm-egg fusion. Binds LGALS3BP and NMRK2, when associated with alpha-7, but not with alpha-5. Interacts with FLNA, FLNB, FLNC and RANBP9. Interacts with KRT1 in the presence of RACK1 and SRC. Interacts with JAML; integrin alpha-4/beta-1 may regulate leukocyte to endothelial cells adhesion by controlling JAML homodimerization. Interacts with RAB21. Interacts (via the cytoplasmic region) with RAB25 (via the hypervariable C-terminal region). Interacts with MYO10. Interacts with ITGB1BP1 (via C-terminal region); the interaction is a prerequisite for focal adhesion disassembly. Interacts with TLN1; the interaction is prevented by competitive binding of ITGB1BP1. Interacts with ACAP1; required for ITGB1 recycling. Interacts with ASAP3. Interacts with FERMT2; the interaction is inhibited in presence of ITGB1BP1. Interacts with DAB2. Interacts with FGR and HCK. Interacts with alpha-7A and alpha-7B in adult skeletal muscle. Interacts with alpha-7B in cardiomyocytes of adult heart. Interacts with EMP2; the interaction may be direct or indirect and ITGB1 has a heterodimer form. ITGA5:ITGB1 interacts with CCN3. ITGA4:ITGB1 is found in a ternary complex with CX3CR1 and CX3CL1. ITGA5:ITGB1 interacts with FBN1. ITGA5:ITGB1 interacts with IL1B. Interacts with MDK. ITGA4:ITGB1 interacts with MDK; this interaction mediates MDK-induced osteoblast cells migration through PXN phosphorylation. ITGA6:ITGB1 interacts with MDK; this interaction mediates MDK-induced neurite-outgrowth. ITGA5:ITGB1 interacts with ACE2. Interacts with TMEM182 and LAMB1. Interacts with tensin TNS3; TNS3 also interacts with PEAK1, thus acting as an adapter molecule to bridge the association of PEAK1 with ITGB1. Interacts with tensin TNS4; the interaction displaces tensin TNS3 from the ITGB1 cytoplasmic tail and promotes ITGB1 stability. Integrin ITGA9:ITGB1 interacts with SPP1/OPN (via N-terminus). Integrin ITGA9:ITGB1 interacts with TNC/TNFN3 (via the 3rd Fibronectin type-III domain). Integrins ITGA4:ITGB1 and ITGA9:ITGB1 interact with SVEP1 (via Sushi domain 21); thereby inhibit Ca(2+) intracellular signaling and as a result repress vasocontraction. ITGA4:ITGB1 and ITGA5:ITGB1 interacts with SELP. Interacts with CD248. ITGA5:ITGB1 interacts with IGFBP1. ITGA4:ITGB1 interacts with BCAM. Interacts with ADGRG6. Expressed in the spleen, thymus, alveolar macrophages, bone marrow, liver and kidney.

The protein resides in the cell membrane. It localises to the cell projection. The protein localises to the invadopodium membrane. It is found in the ruffle membrane. Its subcellular location is the recycling endosome. The protein resides in the melanosome. It localises to the lamellipodium. The protein localises to the ruffle. It is found in the cell junction. Its subcellular location is the focal adhesion. In terms of biological role, integrins alpha-1/beta-1, alpha-2/beta-1, alpha-10/beta-1 and alpha-11/beta-1 are receptors for collagen. Integrins alpha-1/beta-1 and alpha-2/beta-2 recognize the proline-hydroxylated sequence G-F-P-G-E-R in collagen. Integrins alpha-2/beta-1, alpha-3/beta-1, alpha-4/beta-1, alpha-5/beta-1, alpha-8/beta-1, alpha-10/beta-1, alpha-11/beta-1 and alpha-V/beta-1 are receptors for fibronectin. Alpha-4/beta-1 recognizes one or more domains within the alternatively spliced CS-1 and CS-5 regions of fibronectin. Integrin alpha-5/beta-1 is a receptor for fibrinogen. Integrin alpha-1/beta-1, alpha-2/beta-1, alpha-6/beta-1 and alpha-7/beta-1 are receptors for lamimin. Integrin alpha-6/beta-1 (ITGA6:ITGB1) is present in oocytes and is involved in sperm-egg fusion. Integrin alpha-4/beta-1 is a receptor for VCAM1 and recognizes the sequence Q-I-D-S in VCAM1. Integrin alpha-9/beta-1 is a receptor for VCAM1, cytotactin and osteopontin. It recognizes the sequence A-E-I-D-G-I-E-L in cytotactin. Integrin alpha-3/beta-1 is a receptor for epiligrin, thrombospondin and CSPG4. Integrin alpha-3/beta-1 provides a docking site for FAP (seprase) at invadopodia plasma membranes in a collagen-dependent manner and hence may participate in the adhesion, formation of invadopodia and matrix degradation processes, promoting cell invasion. Alpha-3/beta-1 may mediate with LGALS3 the stimulation by CSPG4 of endothelial cells migration. Integrin alpha-V/beta-1 is a receptor for vitronectin. Beta-1 integrins recognize the sequence R-G-D in a wide array of ligands. When associated with alpha-7/beta-1 integrin, regulates cell adhesion and laminin matrix deposition. Involved in promoting endothelial cell motility and angiogenesis. Involved in osteoblast compaction through the fibronectin fibrillogenesis cell-mediated matrix assembly process and the formation of mineralized bone nodules. May be involved in up-regulation of the activity of kinases such as PKC via binding to KRT1. Together with KRT1 and RACK1, serves as a platform for SRC activation or inactivation. Plays a mechanistic adhesive role during telophase, required for the successful completion of cytokinesis. ITGA4:ITGB1 binds to fractalkine (CX3CL1) and may act as its coreceptor in CX3CR1-dependent fractalkine signaling. ITGA4:ITGB1 and ITGA5:ITGB1 bind to PLA2G2A via a site (site 2) which is distinct from the classical ligand-binding site (site 1) and this induces integrin conformational changes and enhanced ligand binding to site 1. ITGA5:ITGB1 acts as a receptor for fibrillin-1 (FBN1) and mediates R-G-D-dependent cell adhesion to FBN1. ITGA5:ITGB1 acts as a receptor for fibronectin FN1 and mediates R-G-D-dependent cell adhesion to FN1. ITGA5:ITGB1 is a receptor for IL1B and binding is essential for IL1B signaling. ITGA5:ITGB3 is a receptor for soluble CD40LG and is required for CD40/CD40LG signaling. Plays an important role in myoblast differentiation and fusion during skeletal myogenesis. ITGA9:ITGB1 may play a crucial role in SVEP1/polydom-mediated myoblast cell adhesion. Integrins ITGA9:ITGB1 and ITGA4:ITGB1 repress PRKCA-mediated L-type voltage-gated channel Ca(2+) influx and ROCK-mediated calcium sensitivity in vascular smooth muscle cells via their interaction with SVEP1, thereby inhibit vasocontraction. The sequence is that of Integrin beta-1 (ITGB1) from Sus scrofa (Pig).